We begin with the raw amino-acid sequence, 427 residues long: Glutamate-1-semialdehyde 2,1-aminomutase (427 aa).

An N6-(pyridoxal phosphate)lysine modification is found at lysine 265.

This sequence belongs to the class-III pyridoxal-phosphate-dependent aminotransferase family. HemL subfamily. In terms of assembly, homodimer. Pyridoxal 5'-phosphate is required as a cofactor.

It localises to the cytoplasm. It carries out the reaction (S)-4-amino-5-oxopentanoate = 5-aminolevulinate. The protein operates within porphyrin-containing compound metabolism; protoporphyrin-IX biosynthesis; 5-aminolevulinate from L-glutamyl-tRNA(Glu): step 2/2. This Burkholderia thailandensis (strain ATCC 700388 / DSM 13276 / CCUG 48851 / CIP 106301 / E264) protein is Glutamate-1-semialdehyde 2,1-aminomutase.